The following is a 284-amino-acid chain: Avenin-like b8 (284 aa).

A signal peptide spans 1–18 (MKVFILALLALAATTAIA).

Belongs to the prolamin family. In terms of processing, contains disulfide bonds.

Its function is as follows. Seed storage protein. Might be integrated via inter-chain disulfide bonds within the glutenin polymer. The polypeptide is Avenin-like b8 (Triticum aestivum (Wheat)).